Here is a 923-residue protein sequence, read N- to C-terminus: Rap guanine nucleotide exchange factor 3 (923 aa).

S79 bears the Phosphoserine mark. A DEP domain is found at 110–186; that stretch reads ATCPNLIRDR…RDAQFYRFPG (77 aa). The interaction with PDE3B stretch occupies residues 218–242; sequence TVALRKPPGQRTDEELDLIFEELLH. 3',5'-cyclic AMP is bound by residues 311 to 314 and 321 to 322; these read GQLA and RA. Residues 384 to 518 enclose the N-terminal Ras-GEF domain; the sequence is NRYTVMSGTP…EQWPERRRCH (135 aa). Residues 398–422 are interaction with PDE3B; sequence ELLLEAMGPDSSAHDPTETFLSDFL. A phosphoserine mark is found at S528 and S864. The Ras-GEF domain occupies 662–889; the sequence is SAKDLAGQLT…ARISTCSEQS (228 aa).

As to quaternary structure, interacts with PDE3B and PIK3R6; form a signaling complex that regulates phosphatidylinositol 3-kinase gamma in angiogenesis. As to expression, widely expressed with highest levels in adult kidney, heart, thyroid and brain, and fetal kidney.

The protein localises to the endomembrane system. Functionally, guanine nucleotide exchange factor (GEF) for RAP1A and RAP2A small GTPases that is activated by binding cAMP. Through simultaneous binding of PDE3B to RAPGEF3 and PIK3R6 is assembled in a signaling complex in which it activates the PI3K gamma complex and which is involved in angiogenesis. Plays a role in the modulation of the cAMP-induced dynamic control of endothelial barrier function through a pathway that is independent on Rho-mediated signaling. Required for the actin rearrangement at cell-cell junctions, such as stress fibers and junctional actin. This chain is Rap guanine nucleotide exchange factor 3 (RAPGEF3), found in Homo sapiens (Human).